A 367-amino-acid chain; its full sequence is Small ribosomal subunit protein uS2 (367 aa).

The tract at residues 1–68 (MPKKAEAKTG…NSTPSTGSKF (68 aa)) is disordered. Residues 21 to 40 (AKKDVKAEVNETNKTAEKVS) are compositionally biased toward basic and acidic residues. The span at 53-66 (TNESSSNSTPSTGS) shows a compositional bias: low complexity.

This sequence belongs to the universal ribosomal protein uS2 family.

The polypeptide is Small ribosomal subunit protein uS2 (Malacoplasma penetrans (strain HF-2) (Mycoplasma penetrans)).